A 105-amino-acid chain; its full sequence is MFELDKDTFETEVLQGTGYVLVDFWSEGCEPCKALMPDIQEMEKTYGEQVRFTKLDTTKARRLAIKEKVLGLPTIAIYKDGQKIDELTKEDATAANVEAMVKKYI.

The Thioredoxin domain occupies 1–105; that stretch reads MFELDKDTFE…NVEAMVKKYI (105 aa). Cysteine 29 and cysteine 32 are joined by a disulfide.

The protein belongs to the thioredoxin family.

Participates in various redox reactions through the reversible oxidation of its active center dithiol to a disulfide and catalyzes dithiol-disulfide exchange reactions. This Acetoanaerobium sticklandii (strain ATCC 12662 / DSM 519 / JCM 1433 / CCUG 9281 / NCIMB 10654 / HF) (Clostridium sticklandii) protein is Thioredoxin (trxA).